The chain runs to 1135 residues: MPRSTPVASEQVDFVMKLLGNTTKQITTATYIKLAWAVVISCNTGSNDTVFGITVNGRGAPIDGAGEMTGATIATIPQHGCILRVWSLPRMPAGMISRERVQRLLQHLELVLQDLMADPSCKVGDLPRMSRQEWDQIQRWSGTLPPVSRQCVHEIVNQRSLQFPNACAVSAPDGDLSYAELIRSANAVAAELLVHGVERGNYIPVLFEKCKWSPVAMLGVLKAGAAFVLLDSSYPPQRLHTICGGLKTQIILCSKDMYARAASLGPTAIAIHENAAFLADIPDVTFPVVSPENAAYVVFTSGSTGTPKGAVIDHQSYCSGALAHNRAHVLGRNSRVLQYASYAFDVSIMETLSTLMAGGCVCILSDLERHDHFANSVQRLAVTHAFLTPSTARLLMQRELPSLCVLVLGGEAMSLADRSYWMSRVRLMNEYGIAECSVASTIREVSHVEQKDIGFPMGVVAWVVDQNDHEKLVAIGATGELLLEGPSPPVGRSSSNRAGSGRCAMGSQAGSYKTGDLVRYNEDGSLSFISRKDSQIKIRGQRFELEEVEQHLRRIDEIQEATTVVAAPSDRPKQPYLVAFIVPRARESFCVCSARALIPHPTEEFRLQAATIQTKLHSILPAHMVPAIYLPVNRMPKTSSDKIDRCRLKEEVGKWSWSDLRAYSVSSMSHRAPSNRVEQDLQRVWEQILGILLDSVGVEDSFFHLGGDSIIAMQVVAEARSRGLDHSVQDINQLKTIKAIANKIGDVQRAAIKLVQNHAMLRARYVRQKDGAWKQFFTGYTEQCFRFSVHQVKSAQEMRQIIGESQTSLNPEHGPVFTVDLFHHGGEQSLLMIGHHLVLDLVSWRIILADMEAMILDPQHQPHLTMSFQTWAHLQAEYGTRHLEPPPGQQPCSIDEPSMRQFWGAENNANTGGDSKTRLIRMNDDLTRKLFGPSSQALDVEPVELLHAAILFSFVNTFPQRPALVIFGEAHGRETWDSSVDVTRTIGWFTTLWPVVAQVNPSDSLETVARTVRQARRAMDMHGWTHFTSVYHNTRQTKRSAGAHLMEITFNYAGKFQQVEQDGSLFRMEPMAKQNLFDGAAELGRWAMLEINSVILNGLLEFHVPYNRGTDEARVLTPWMDNLVKCLEGLASGFA.

The interval 23–77 (TKQITTATYIKLAWAVVISCNTGSNDTVFGITVNGRGAPIDGAGEMTGATIATIP) is condensation 1. The segment at 177–562 (SYAELIRSAN…RRIDEIQEAT (386 aa)) is adenylation. A disordered region spans residues 485-507 (GPSPPVGRSSSNRAGSGRCAMGS). Low complexity predominate over residues 491–502 (GRSSSNRAGSGR). Residues 672–748 (APSNRVEQDL…AIANKIGDVQ (77 aa)) form the Carrier domain. S709 carries the O-(pantetheine 4'-phosphoryl)serine modification. The segment at 746 to 999 (DVQRAAIKLV…TTLWPVVAQV (254 aa)) is condensation 2.

Belongs to the NRP synthetase family.

Its function is as follows. Nonribosomal peptide synthesis (NRPS) is a key mechanism responsible for the biosynthesis of bioactive metabolites which are potentially contributing to organismal virulence. This chain is Nonribosomal peptide synthetase 9 (NRPS9), found in Aspergillus fumigatus (strain ATCC MYA-4609 / CBS 101355 / FGSC A1100 / Af293) (Neosartorya fumigata).